The following is a 560-amino-acid chain: SWI/SNF complex subunit SWI3A homolog (560 aa).

Over residues 1 to 13 the composition is skewed to low complexity; it reads MSPPVAGAASSGD. A disordered region spans residues 1–22; the sequence is MSPPVAGAASSGDGPPGRPPRE. Residues 24-127 form the SWIRM domain; that stretch reads YTIPASSGWF…FSASPSRPEA (104 aa). Residues 242-293 enclose the SANT domain; sequence HSSSAWTDAETLLLLEGVLKHGDDWDLIAQHVRTKNKSECIARLIQLPFGEH. A compositionally biased stretch (polar residues) spans 311–330; sequence TTDGKVNKSTVKESSSQPTE. Disordered stretches follow at residues 311-352 and 414-445; these read TTDG…EEHP and QTRAFSSNHARQSDDVGGGDRDVEMHGHPDKK. A compositionally biased stretch (acidic residues) spans 331 to 342; that stretch reads TVDDMQIDGNED. Basic and acidic residues-rich tracts occupy residues 343–352 and 424–445; these read GADKSVEEHP and RQSDDVGGGDRDVEMHGHPDKK.

Interacts with LFR.

It is found in the nucleus. Its function is as follows. Component of a multiprotein complex equivalent of the SWI/SNF complex, an ATP-dependent chromatin-remodeling complex, which is required for the positive and negative regulation of gene expression of a large number of genes. It changes chromatin structure by altering DNA-histone contacts within a nucleosome, leading eventually to a change in nucleosome position, thus facilitating or repressing binding of gene-specific transcription factors. The polypeptide is SWI/SNF complex subunit SWI3A homolog (Oryza sativa subsp. japonica (Rice)).